The sequence spans 149 residues: MNLYLHPKLWPQLAGTKTLHVADAQRVRKITVHDGIWDAELPRAKRNHSYHLRYHGSSYSRCFLERYRCKTIGVFRRSNQPDCLETRSEKAKNRDGVVQEKSVRTLFSECVNQCDIRRRPTRFLRMFYHQKHFQLGLKGTETEKNERRL.

In terms of tissue distribution, expressed in heart, kidney, lung, and skeletal muscle, with lower levels in pancreas and liver.

Its function is as follows. May function as an early signal that helps mediate the activation of T-cells. This is Early lymphoid activation gene protein (DIAPH2-AS1) from Homo sapiens (Human).